A 540-amino-acid polypeptide reads, in one-letter code: Probable protein kinase UbiB (540 aa).

A helical transmembrane segment spans residues 24-44 (LLFEQPLLPWWLASLRLLMPW). Positions 126–494 (RFDVEPLASA…RRRQGDRWAL (369 aa)) constitute a Protein kinase domain. Residues 132–140 (LASASVAQV) and lysine 154 contribute to the ATP site. Aspartate 289 serves as the catalytic Proton acceptor. The next 2 helical transmembrane spans lie at 496–516 (LLGA…AEAA) and 518–538 (LAAP…YLIV).

The protein belongs to the ABC1 family. UbiB subfamily.

The protein resides in the cell inner membrane. The protein operates within cofactor biosynthesis; ubiquinone biosynthesis [regulation]. Functionally, is probably a protein kinase regulator of UbiI activity which is involved in aerobic coenzyme Q (ubiquinone) biosynthesis. The polypeptide is Probable protein kinase UbiB (Pseudomonas putida (strain GB-1)).